Consider the following 181-residue polypeptide: ADP-ribosylation factor 1 (181 aa).

Gly2 carries the N-myristoyl glycine lipid modification. GTP is bound by residues 24 to 31, 67 to 71, and 126 to 129; these read GLDAAGKT, DVGGQ, and NKQD.

This sequence belongs to the small GTPase superfamily. Arf family.

It is found in the golgi apparatus. The catalysed reaction is GTP + H2O = GDP + phosphate + H(+). In terms of biological role, GTP-binding protein involved in protein trafficking; may modulate vesicle budding and uncoating within the Golgi apparatus. This is ADP-ribosylation factor 1 (ARF1) from Chlamydomonas reinhardtii (Chlamydomonas smithii).